The following is a 112-amino-acid chain: Cytochrome c type-1 (112 aa).

4 residues coordinate heme c: Cys-20, Cys-23, His-24, and Met-85.

In terms of processing, binds 1 heme c group covalently per subunit.

Its subcellular location is the mitochondrion intermembrane space. Its function is as follows. Electron carrier between complex III (ubiquinol-cytochrome c oxireductase) and complex IV (cytochrome c oxidase). The sequence is that of Cytochrome c type-1 from Ascaris suum (Pig roundworm).